A 65-amino-acid polypeptide reads, in one-letter code: Toxin CsEM1 (65 aa).

An LCN-type CS-alpha/beta domain is found at 1–65; that stretch reads KEGYLVNSYT…VWPLPNKTCN (65 aa). 4 disulfide bridges follow: Cys-12/Cys-64, Cys-16/Cys-40, Cys-25/Cys-45, and Cys-29/Cys-47.

This sequence belongs to the long (4 C-C) scorpion toxin superfamily. Sodium channel inhibitor family. Beta subfamily. Expressed by the venom gland.

It localises to the secreted. Beta toxins bind voltage-independently at site-4 of sodium channels (Nav) and shift the voltage of activation toward more negative potentials thereby affecting sodium channel activation and promoting spontaneous and repetitive firing. Highly potent. This Centruroides sculpturatus (Arizona bark scorpion) protein is Toxin CsEM1.